The following is a 1032-amino-acid chain: Error-prone DNA polymerase (1032 aa).

It belongs to the DNA polymerase type-C family. DnaE2 subfamily.

Its subcellular location is the cytoplasm. It carries out the reaction DNA(n) + a 2'-deoxyribonucleoside 5'-triphosphate = DNA(n+1) + diphosphate. In terms of biological role, DNA polymerase involved in damage-induced mutagenesis and translesion synthesis (TLS). It is not the major replicative DNA polymerase. The sequence is that of Error-prone DNA polymerase from Hahella chejuensis (strain KCTC 2396).